The sequence spans 469 residues: UDP-N-acetylmuramate--L-alanine ligase (469 aa).

ATP is bound at residue G113–T119.

Belongs to the MurCDEF family.

The protein localises to the cytoplasm. It catalyses the reaction UDP-N-acetyl-alpha-D-muramate + L-alanine + ATP = UDP-N-acetyl-alpha-D-muramoyl-L-alanine + ADP + phosphate + H(+). It functions in the pathway cell wall biogenesis; peptidoglycan biosynthesis. Cell wall formation. The chain is UDP-N-acetylmuramate--L-alanine ligase from Neisseria meningitidis serogroup C / serotype 2a (strain ATCC 700532 / DSM 15464 / FAM18).